The primary structure comprises 219 residues: Protein DCL homolog, chloroplastic (219 aa).

The transit peptide at 1 to 48 (MSLASIPSSSPVASPYFRCRTYIFSFSSSPLCLYFPRGDSTSLRPRVR) directs the protein to the chloroplast. Residues 70-96 (LRRPRIASEESSEEEEEEEEENSEGDE) are disordered. Over residues 79-96 (ESSEEEEEEEEENSEGDE) the composition is skewed to acidic residues.

Expressed in leaves, stems, flowers and siliques.

The protein localises to the plastid. Its subcellular location is the chloroplast. Required for normal plastid function and plant development. Required for correct plastid ribosome assembly. Required for processing and maturation of 4.5S rRNA. This chain is Protein DCL homolog, chloroplastic, found in Arabidopsis thaliana (Mouse-ear cress).